The chain runs to 63 residues: Beta-defensin 35 (63 aa).

Positions 1–23 (MPQTFFVFCFLFFVFLQLFPGTG) are cleaved as a signal peptide. 3 cysteine pairs are disulfide-bonded: cysteine 31-cysteine 58, cysteine 38-cysteine 52, and cysteine 42-cysteine 59.

Belongs to the beta-defensin family. Expressed in testis, epididymis (caput, corpus and cauda), kidney and neonatal and adult brain.

The protein resides in the secreted. Functionally, has antibacterial activity. In Mus musculus (Mouse), this protein is Beta-defensin 35 (Defb35).